A 656-amino-acid polypeptide reads, in one-letter code: Probable Xaa-Pro aminopeptidase P (656 aa).

Mn(2+)-binding residues include D453, D464, E562, and E576.

It belongs to the peptidase M24B family. It depends on Mn(2+) as a cofactor.

It catalyses the reaction Release of any N-terminal amino acid, including proline, that is linked to proline, even from a dipeptide or tripeptide.. Functionally, catalyzes the removal of a penultimate prolyl residue from the N-termini of peptides. The protein is Probable Xaa-Pro aminopeptidase P (ampp) of Pyrenophora teres f. teres (strain 0-1) (Barley net blotch fungus).